Reading from the N-terminus, the 569-residue chain is MARKTVAAALALVAGAAVAVTGNAPAQAVPPGEKDVTAVMFEWNFASVARECTDRLGPAGYGYVQVSPPQEHLQGGQWWTSYQPVSYKIAGRLGDRTAFKNMIDTCHAAGVKVVADSVINHMANGSGTGTGGTSFSKYDYPGLYSGSDMDDCRATISNYQDRANVQNCELVQLPDLDTGEDHVRGKIAGYLNDLASLGVDGFRIDAAKHMPAADLANIKSRLTNPNVFWKLEAIHGAGEAVSPSEYLGSGDVQEFRYARDLKRVLQGEKLSYLKNFGEAWGHMPSGQSGVFVDNHDTERGGDTLSYKDGANYTLASVFMLAWPYGSPDVHSGYEWTDKDAGPPNNGQVNACYTDGWKCQHAWREISSMVAFRNTARGQAVTNWWDNGNNAIAFGRGSKAYVAINHETSALTRTFQTSLPAGSYCDVQSNTPVTVNSSGQFTATLAANTAVALHVNATGCGSTPTTPPTTPPATSGASFNVTATTVVGQNIYVTGNRAELGNWAPASALKLDPATYPVWKLTVGLPAGTSFEYKYIRKDAAGNVTWESGANRTATVPASGQLVLNDTFRS.

Residues 1-28 form the signal peptide; the sequence is MARKTVAAALALVAGAAVAVTGNAPAQA. Positions 120, 166, and 175 each coordinate Ca(2+). Aspartate 205 acts as the Nucleophile in catalysis. Histidine 209 provides a ligand contact to Ca(2+). The active-site Proton donor is glutamate 232. The CBM20 domain occupies 468–569; sequence TTPPATSGAS…QLVLNDTFRS (102 aa).

This sequence belongs to the glycosyl hydrolase 13 family. Monomer. Ca(2+) serves as cofactor.

The enzyme catalyses Endohydrolysis of (1-&gt;4)-alpha-D-glucosidic linkages in polysaccharides containing three or more (1-&gt;4)-alpha-linked D-glucose units.. This is Alpha-amylase (aml) from Streptomyces violaceus (Streptomyces venezuelae).